A 466-amino-acid chain; its full sequence is Argininosuccinate lyase (466 aa).

It belongs to the lyase 1 family. Argininosuccinate lyase subfamily.

It localises to the cytoplasm. It catalyses the reaction 2-(N(omega)-L-arginino)succinate = fumarate + L-arginine. It functions in the pathway amino-acid biosynthesis; L-arginine biosynthesis; L-arginine from L-ornithine and carbamoyl phosphate: step 3/3. The polypeptide is Argininosuccinate lyase (Clostridium perfringens (strain ATCC 13124 / DSM 756 / JCM 1290 / NCIMB 6125 / NCTC 8237 / Type A)).